A 172-amino-acid chain; its full sequence is Endoribonuclease YbeY (172 aa).

His-136, His-140, and His-146 together coordinate Zn(2+).

Belongs to the endoribonuclease YbeY family. Zn(2+) serves as cofactor.

The protein localises to the cytoplasm. Single strand-specific metallo-endoribonuclease involved in late-stage 70S ribosome quality control and in maturation of the 3' terminus of the 16S rRNA. The protein is Endoribonuclease YbeY of Rickettsia canadensis (strain McKiel).